We begin with the raw amino-acid sequence, 327 residues long: Leucotoxin LukDv (327 aa).

The first 26 residues, 1–26, serve as a signal peptide directing secretion; sequence MKMKKLVKSSVASSIALLLLSNTVDA.

Belongs to the aerolysin family. As to quaternary structure, toxicity requires sequential binding and synergistic association of a class S and a class F component which form heterooligomeric complexes. LukEv (class S) associates with LukDv (class F).

The protein localises to the secreted. Its function is as follows. Part of a bi-component leucotoxin that acts by forming pores in the membrane of the target cells. The activity of LukEv-LukDv to rabbit leukocytes is similar to that of the Panton-Valentine leucocidin (PVL). LukEv-LukDv is hemolytic to rabbit red blood cells although the activity is only 8% of gamma-hemolysin. The chain is Leucotoxin LukDv (lukDv) from Staphylococcus aureus (strain NCTC 8325 / PS 47).